The following is a 237-amino-acid chain: Ribosomal RNA small subunit methyltransferase G (237 aa).

S-adenosyl-L-methionine-binding positions include Gly-76, Phe-81, 128-129, and Arg-147; that span reads VE.

Belongs to the methyltransferase superfamily. RNA methyltransferase RsmG family.

It is found in the cytoplasm. In terms of biological role, specifically methylates the N7 position of a guanine in 16S rRNA. This chain is Ribosomal RNA small subunit methyltransferase G, found in Prochlorococcus marinus (strain AS9601).